Consider the following 434-residue polypeptide: MLRCLYHWHRPVLNRRWSRLCLPKQYLFTMKLQSPEFQSLFTEGLKSLTELFVKENHELRIAGGAVRDLLNGVKPQDIDFATTATPTQMKEMFQSAGIRMINNRGEKHGTITARLHEENFEITTLRIDVTTDGRHAEVEFTTDWQKDAERRDLTINSMFLGFDGTLFDYFNGYEDLKNKKVRFVGHAKQRIQEDYLRILRYFRFYGRIVDKPGDHDPETLEAIAENAKGLAGISGERIWVELKKILVGNHVNHLIHLIYDLDVAPYIGLPANASLEEFDKVSKNVDGFSPKPVTLLASLFKVQDDVTKLDLRLKIAKEEKNLGLFIVKNRKDLIKATDSSDPLKPYQDFIIDSREPDATTRVCELLKYQGEHCLLKEMQQWSIPPFPVSGHDIRKVGISSGKEIGALLQQLREQWKKSGYQMEKDELLSYIKKT.

A mitochondrion-targeting transit peptide spans 1–41 (MLRCLYHWHRPVLNRRWSRLCLPKQYLFTMKLQSPEFQSLF). Gly-64 and Arg-67 together coordinate ATP. Residues Gly-64 and Arg-67 each coordinate CTP. Mg(2+)-binding residues include Asp-77 and Asp-79. Residues Arg-151, Asp-194, Arg-197, Arg-200, and Arg-203 each contribute to the ATP site. Residues Arg-151, Asp-194, Arg-197, Arg-200, and Arg-203 each contribute to the CTP site. The residue at position 400 (Ser-400) is a Phosphoserine. Lys-402 is modified (N6-acetyllysine).

This sequence belongs to the tRNA nucleotidyltransferase/poly(A) polymerase family. In terms of assembly, monomer, and homodimer; disulfide-linked. The cofactor is Mg(2+).

The protein resides in the mitochondrion. It is found in the cytoplasm. The protein localises to the nucleus. It carries out the reaction a tRNA precursor + 2 CTP + ATP = a tRNA with a 3' CCA end + 3 diphosphate. The enzyme catalyses a tRNA with a 3' CCA end + 2 CTP + ATP = a tRNA with a 3' CCACCA end + 3 diphosphate. Nucleotidyltransferase that catalyzes the addition and repair of the essential 3'-terminal CCA sequence in tRNAs, which is necessary for the attachment of amino acids to the 3' terminus of tRNA molecules, using CTP and ATP as substrates. tRNA 3'-terminal CCA addition is required both for tRNA processing and repair. Promotes tRNA repair and recycling downstream of the ribosome-associated quality control (RQC) pathway by mediating addition of the tRNA 3'-terminal CCA following cleavage by ANKZF1 and repair by ELAC1. Also involved in tRNA surveillance by mediating tandem CCA addition to generate a CCACCA at the 3' terminus of unstable tRNAs and tRNA-like transcripts. While stable tRNAs receive only 3'-terminal CCA, unstable tRNAs beginning with GG are marked with CCACCA and rapidly degraded. The structural flexibility of RNA controls the choice between CCA versus CCACCA addition: following the first CCA addition cycle, nucleotide-binding to the active site triggers a clockwise screw motion, producing torque on the RNA. This ejects stable RNAs, whereas unstable RNAs are refolded while bound to the enzyme and subjected to a second CCA catalytic cycle. Its function is as follows. Adds 2 C residues (CC-) to the 3' terminus of tRNA molecules instead of a complete CCA end as isoform 1 does (in vitro). This Homo sapiens (Human) protein is CCA tRNA nucleotidyltransferase 1, mitochondrial.